The sequence spans 241 residues: Aliphatic sulfonates import ATP-binding protein SsuB (241 aa).

Residues 10–226 (VHLHGFSRSF…RPDHPAFMQL (217 aa)) form the ABC transporter domain. 42-49 (GESGSGKT) contacts ATP.

It belongs to the ABC transporter superfamily. Aliphatic sulfonates importer (TC 3.A.1.17.2) family. As to quaternary structure, the complex is composed of two ATP-binding proteins (SsuB), two transmembrane proteins (SsuC) and a solute-binding protein (SsuA).

The protein localises to the cell inner membrane. The catalysed reaction is ATP + H2O + aliphatic sulfonate-[sulfonate-binding protein]Side 1 = ADP + phosphate + aliphatic sulfonateSide 2 + [sulfonate-binding protein]Side 1.. Functionally, part of the ABC transporter complex SsuABC involved in aliphatic sulfonates import. Responsible for energy coupling to the transport system. In Delftia acidovorans (Pseudomonas acidovorans), this protein is Aliphatic sulfonates import ATP-binding protein SsuB.